The following is a 518-amino-acid chain: MAGRKSSRTTGEPVKKAERKSAILSPHDELRERLLETSLDVKENIPERSSSTRNESVGSQRSDCSESRKRRSTEKGPVAKRPSTEKKGNGSRDDSFSSVFSEDRETESSVGSTSSRTRGQPLPAMPEEEESLDGSSDHNAESEESRETPQSDEHDGFEEDGDVEDDVSSDVNDEEDEYDEYEEDEETEDEFDLPLQNDDFAVTKRLMNDRHMIDAPSLLSYGKCEGIGSPTKVWSLMVKRDDIPRATRQLLRNHPDMTINMRRVLVDWMMECCDVEKLHRETFHLAVDYADRFLESTREEVISENFQLVGTAALFIAAKYEEIYPPKCADLAALTDGAFSCDDICRMESIVAKDLKWSFGPITSVQWLSTYLQLLGTGKKNNDHFEEGNMYIPELLRSEYLRMVRILDYLLSDIDSFNFSYRTIAAAVLFVNYDPRSAVEKATGFIYEQLRNVIDYVTPICRAYDRFTQEHVPKDIIPDYAPAEDAHNIQVHIKHYEVDPYVEKERERRHRRGPNRRL.

The segment at 1-193 (MAGRKSSRTT…DEETEDEFDL (193 aa)) is disordered. The segment covering 13–46 (PVKKAERKSAILSPHDELRERLLETSLDVKENIP) has biased composition (basic and acidic residues). A compositionally biased stretch (polar residues) spans 47-62 (ERSSSTRNESVGSQRS). Positions 82 to 107 (PSTEKKGNGSRDDSFSSVFSEDRETE) are enriched in basic and acidic residues. The segment covering 108-119 (SSVGSTSSRTRG) has biased composition (low complexity). Positions 135–154 (SSDHNAESEESRETPQSDEH) are enriched in basic and acidic residues. A compositionally biased stretch (acidic residues) spans 155–192 (DGFEEDGDVEDDVSSDVNDEEDEYDEYEEDEETEDEFD).

It belongs to the cyclin family. Cyclin E subfamily. As to quaternary structure, interacts with a member of the CDK2/CDK protein kinases to form a serine/threonine kinase holoenzyme complex. The cyclin subunit imparts substrate specificity to the complex.

Its subcellular location is the nucleus. The protein localises to the cytoplasm. The protein resides in the cytoskeleton. It localises to the microtubule organizing center. It is found in the centrosome. Its subcellular location is the centriole. In terms of biological role, essential for the control of the cell cycle at the G1/S (start) transition. In association with cdk-2, regulates proliferation, quiescent state and cell fate during the development of several cell lineages. In the embryo, initiates the establishment of cell polarity through the recruitment of the centrosomal proteins spd-2 and spd-5 during prophase. During the development of the vulva, controls the onset of vulval cell terminal differentiation by controlling the duration of G1 phase. During hypoderm development at early larval stages, controls syncytial fate of seam cell daughter cells. Involved in the progression of cell division in the intestinal lineage in larvae, and in particular in endoreplication, a specific growth pathway in the intestinal epithelium, required for feeding and gut development in growing larvae. By controlling the activity of translational repressor gld-1, regulates the pool of germline stem cells and the size of the mitotic zone by preventing entry into meiosis. In addition, repression of expression by gld-1 prevents mitosis re-entry in meiotic germline cells. The protein is G1/S-specific cyclin-E (cye-1) of Caenorhabditis briggsae.